The sequence spans 95 residues: Large ribosomal subunit protein uL23c (95 aa).

The protein belongs to the universal ribosomal protein uL23 family. In terms of assembly, part of the 50S ribosomal subunit.

Its subcellular location is the plastid. The protein resides in the chloroplast. In terms of biological role, binds to 23S rRNA. The sequence is that of Large ribosomal subunit protein uL23c (rpl23) from Chlamydomonas reinhardtii (Chlamydomonas smithii).